The following is a 37-amino-acid chain: Protein YnaM (37 aa).

A helical membrane pass occupies residues 4–24; sequence ILIITSLLIIFSIFSHALIKL.

Its subcellular location is the cell inner membrane. This chain is Protein YnaM, found in Escherichia coli (strain K12).